We begin with the raw amino-acid sequence, 129 residues long: Small ribosomal subunit protein uS11c (129 aa).

It belongs to the universal ribosomal protein uS11 family. In terms of assembly, part of the 30S ribosomal subunit.

The protein resides in the plastid. It localises to the chloroplast. The chain is Small ribosomal subunit protein uS11c from Rhodomonas salina (Cryptomonas salina).